A 315-amino-acid chain; its full sequence is 10-epi-cubebol synthase (315 aa).

Residues Asp-79, Asn-220, Ser-224, and Glu-228 each coordinate Mg(2+). The short motif at Asp-79–Glu-83 is the DDXXD motif element. Positions Asn-220 to Glu-228 match the NXXXSXXXE motif motif.

Belongs to the terpene synthase family. Requires Mg(2+) as cofactor.

The enzyme catalyses (2E,6E)-farnesyl diphosphate + H2O = 10-epi-cubebol + diphosphate. In terms of biological role, catalyzes the cyclization of farnesyl diphosphate (FPP) to 10-epi-cubebol. Is also responsible for the formation of many other sesquiterpenes, mainly cadalanes and cubebanes, including 1,10-di-epi-cubebol and the cadalanes delta-cadinene, T-cadinol and alpha-cadinol. This is 10-epi-cubebol synthase from Sorangium cellulosum (strain So ce56) (Polyangium cellulosum (strain So ce56)).